Consider the following 437-residue polypeptide: Transcription factor E2F2 (437 aa).

The cyclin A/CDK2 binding stretch occupies residues 65–105 (ATPHGPEGQVVRCLPAGRLPAKRKLDLEGIGRPVVPEFPTP). Residues 107–196 (GKCIRVDGLP…KNNIQWVGRG (90 aa)) mediate DNA binding. Residues 155–176 (LNWAAEVLDVQKRRIYDITNVL) are leucine-zipper. Residues 160–196 (EVLDVQKRRIYDITNVLEGIQLIRKKAKNNIQWVGRG) carry the DEF box motif. The dimerization stretch occupies residues 197–289 (MFEDPTRPGK…PDRTEDNLQI (93 aa)). Positions 307–368 (VQEPDSPSEE…APPPPSLVPL (62 aa)) are disordered. A compositionally biased stretch (low complexity) spans 315 to 330 (EEPLPSTSTLCPSPDS). A compositionally biased stretch (pro residues) spans 351–365 (APAPTPQQAPPPPSL). Residues 359–437 (APPPPSLVPL…SYDLGDLLIN (79 aa)) form a transactivation region. Residues 410–427 (DDYLWGLEAGEGISDLFD) form a retinoblastoma protein binding region.

This sequence belongs to the E2F/DP family. Component of the DRTF1/E2F transcription factor complex. Forms heterodimers with DP family members. The E2F2 complex binds specifically hypophosphorylated retinoblastoma protein RB1. During the cell cycle, RB1 becomes phosphorylated in mid-to-late G1 phase, detaches from the DRTF1/E2F complex, rendering E2F transcriptionally active. Viral oncoproteins, notably E1A, T-antigen and HPV E7, are capable of sequestering RB1, thus releasing the active complex. Binds EAPP. Phosphorylated by CDK2 and cyclin A-CDK2 in the S-phase. As to expression, highest level of expression is found in placenta, low levels are found in lung. Found as well in many immortalized cell lines derived from tumor samples.

It localises to the nucleus. Transcription activator that binds DNA cooperatively with DP proteins through the E2 recognition site, 5'-TTTC[CG]CGC-3' found in the promoter region of a number of genes whose products are involved in cell cycle regulation or in DNA replication. The DRTF1/E2F complex functions in the control of cell-cycle progression from g1 to s phase. E2F2 binds specifically to RB1 in a cell-cycle dependent manner. The sequence is that of Transcription factor E2F2 (E2F2) from Homo sapiens (Human).